The sequence spans 143 residues: Ribonuclease VapC33 (143 aa).

Mg(2+) is bound by residues Asp5 and Asp108.

It belongs to the PINc/VapC protein family. Requires Mg(2+) as cofactor.

Toxic component of a type II toxin-antitoxin (TA) system. An RNase. Its toxic effect is neutralized by coexpression with cognate antitoxin VapB33. The protein is Ribonuclease VapC33 of Mycobacterium tuberculosis (strain CDC 1551 / Oshkosh).